A 555-amino-acid chain; its full sequence is Protein NRT1/ PTR FAMILY 5.4 (555 aa).

2 helical membrane-spanning segments follow: residues 18–38 and 62–82; these read AALF…GLAS and WIGV…SILG. At T86 the chain carries Phosphothreonine. 10 helical membrane-spanning segments follow: residues 87–107, 116–136, 159–179, 187–207, 311–331, 348–368, 392–412, 435–455, 470–490, and 516–536; these read VLLT…SVTV, VFFM…PCVM, NYWY…LIFI, LGFS…LIGI, IPIW…NTFF, IPPA…IPLY, IGVG…VEAK, LWLL…IVGM, IGAA…TGII, and YYYW…LFIA.

Belongs to the major facilitator superfamily. Proton-dependent oligopeptide transporter (POT/PTR) (TC 2.A.17) family. Expressed in roots and flowers.

It is found in the membrane. The protein is Protein NRT1/ PTR FAMILY 5.4 (NPF5.4) of Arabidopsis thaliana (Mouse-ear cress).